Consider the following 296-residue polypeptide: Coatomer subunit epsilon (296 aa).

It belongs to the COPE family. As to quaternary structure, oligomeric complex that consists of at least the alpha, beta, beta', gamma, delta, epsilon and zeta subunits. Interacts with the ESCRT-0 subunit VPS27.

Its subcellular location is the cytoplasm. The protein resides in the golgi apparatus membrane. It is found in the cytoplasmic vesicle. It localises to the COPI-coated vesicle membrane. The coatomer is a cytosolic protein complex that binds to dilysine motifs and reversibly associates with Golgi non-clathrin-coated vesicles, which further mediate biosynthetic protein transport from the ER, via the Golgi up to the trans Golgi network. The coatomer complex is required for budding from Golgi membranes, and is essential for the retrograde Golgi-to-ER transport of dilysine-tagged proteins. This Saccharomyces cerevisiae (strain ATCC 204508 / S288c) (Baker's yeast) protein is Coatomer subunit epsilon (SEC28).